We begin with the raw amino-acid sequence, 841 residues long: ATP-dependent helicase Lhr-Core (841 aa).

ATP-binding residues include glutamine 39, lysine 62, threonine 63, aspartate 181, glutamate 182, isoleucine 352, arginine 369, and histidine 372. A Helicase ATP-binding domain is found at 43–234 (IKEIHEGKNV…FLVGNGRDCY (192 aa)). The short motif at 181 to 184 (DEIH) is the DEVH box element. Positions 266-416 (RLYNLLKKLI…RIHIPKNCLD (151 aa)) constitute a Helicase C-terminal domain. The segment at 417-500 (VLAQHLVGMA…IYYMNVGTIP (84 aa)) is WH domain. Positions 501–841 (DETAVDVIAD…MEFISMKGKK (341 aa)) are domain 4.

It belongs to the Lhr helicase family. Lhr-Core subfamily. As to quaternary structure, monomer.

It catalyses the reaction Couples ATP hydrolysis with the unwinding of duplex DNA by translocating in the 3'-5' direction.. The enzyme catalyses ATP + H2O = ADP + phosphate + H(+). Functionally, DNA helicase that loads on single-stranded (ss)DNA and translocates in a 3'-5' direction, probably involved in DNA repair. Archaeal orthologs have double-stranded (ds)DNA and/or RNA:DNA helicase activity. The chain is ATP-dependent helicase Lhr-Core from Methanocaldococcus jannaschii (strain ATCC 43067 / DSM 2661 / JAL-1 / JCM 10045 / NBRC 100440) (Methanococcus jannaschii).